A 125-amino-acid polypeptide reads, in one-letter code: Large ribosomal subunit protein bL12 (125 aa).

Belongs to the bacterial ribosomal protein bL12 family. In terms of assembly, homodimer. Part of the ribosomal stalk of the 50S ribosomal subunit. Forms a multimeric L10(L12)X complex, where L10 forms an elongated spine to which 2 to 4 L12 dimers bind in a sequential fashion. Binds GTP-bound translation factors.

Functionally, forms part of the ribosomal stalk which helps the ribosome interact with GTP-bound translation factors. Is thus essential for accurate translation. The sequence is that of Large ribosomal subunit protein bL12 from Rickettsia prowazekii (strain Madrid E).